The sequence spans 306 residues: tRNA dimethylallyltransferase (306 aa).

An ATP-binding site is contributed by Gly-9–Thr-16. Thr-11–Thr-16 contacts substrate. Residues Asp-34–Gln-37 are interaction with substrate tRNA.

This sequence belongs to the IPP transferase family. As to quaternary structure, monomer. Mg(2+) serves as cofactor.

The enzyme catalyses adenosine(37) in tRNA + dimethylallyl diphosphate = N(6)-dimethylallyladenosine(37) in tRNA + diphosphate. In terms of biological role, catalyzes the transfer of a dimethylallyl group onto the adenine at position 37 in tRNAs that read codons beginning with uridine, leading to the formation of N6-(dimethylallyl)adenosine (i(6)A). The protein is tRNA dimethylallyltransferase of Lactobacillus johnsonii (strain CNCM I-12250 / La1 / NCC 533).